The sequence spans 544 residues: Chaperonin GroEL 2 (544 aa).

ATP-binding positions include 29-32 (TLGP), 86-90 (DGTTT), G413, 479-481 (NAA), and D495.

Belongs to the chaperonin (HSP60) family. Forms a cylinder of 14 subunits composed of two heptameric rings stacked back-to-back. Interacts with the co-chaperonin GroES.

Its subcellular location is the cytoplasm. The enzyme catalyses ATP + H2O + a folded polypeptide = ADP + phosphate + an unfolded polypeptide.. Its function is as follows. Together with its co-chaperonin GroES, plays an essential role in assisting protein folding. The GroEL-GroES system forms a nano-cage that allows encapsulation of the non-native substrate proteins and provides a physical environment optimized to promote and accelerate protein folding. This is Chaperonin GroEL 2 from Synechococcus sp. (strain WH7803).